A 213-amino-acid polypeptide reads, in one-letter code: MRSNYIVIEGLEGAGKTTARQLVVETLQSAGIHDMVFTREPGGTILAEKLRSLVLDIQSTGDEVINDKAEVLMFYAARVQLVETVIKPALARGQWVIGDRHDLSTQAYQGGGRGIDRTMLATLRDAVLGDFRPNLTLYLDVTPEVGLQRARARGELDRIEQESMNFFNRTRARYLELAAADPSIRTVDATQPLDAVARDIRATIAQWMAEQAA.

10–17 is a binding site for ATP; it reads GLEGAGKT.

It belongs to the thymidylate kinase family.

It carries out the reaction dTMP + ATP = dTDP + ADP. Functionally, phosphorylation of dTMP to form dTDP in both de novo and salvage pathways of dTTP synthesis. The polypeptide is Thymidylate kinase (Klebsiella pneumoniae subsp. pneumoniae (strain ATCC 700721 / MGH 78578)).